Reading from the N-terminus, the 408-residue chain is Argininosuccinate synthase (408 aa).

ATP-binding positions include 14–22 (AYSGGLDTS) and alanine 41. Residues tyrosine 92 and serine 97 each coordinate L-citrulline. Glycine 122 is a binding site for ATP. L-aspartate contacts are provided by threonine 124, asparagine 128, and aspartate 129. Asparagine 128 contributes to the L-citrulline binding site. L-citrulline-binding residues include arginine 132, serine 181, serine 190, glutamate 266, and tyrosine 278.

Belongs to the argininosuccinate synthase family. Type 1 subfamily. As to quaternary structure, homotetramer.

It is found in the cytoplasm. It catalyses the reaction L-citrulline + L-aspartate + ATP = 2-(N(omega)-L-arginino)succinate + AMP + diphosphate + H(+). Its pathway is amino-acid biosynthesis; L-arginine biosynthesis; L-arginine from L-ornithine and carbamoyl phosphate: step 2/3. The chain is Argininosuccinate synthase from Pelobacter propionicus (strain DSM 2379 / NBRC 103807 / OttBd1).